Consider the following 191-residue polypeptide: UPF0149 protein VCM66_2399 (191 aa).

This sequence belongs to the UPF0149 family.

In Vibrio cholerae serotype O1 (strain M66-2), this protein is UPF0149 protein VCM66_2399.